The primary structure comprises 125 residues: Aspartate 1-decarboxylase (125 aa).

Catalysis depends on S25, which acts as the Schiff-base intermediate with substrate; via pyruvic acid. Pyruvic acid (Ser) is present on S25. Position 57 (T57) interacts with substrate. Y58 serves as the catalytic Proton donor. 73 to 75 (GAA) lines the substrate pocket.

Belongs to the PanD family. Heterooctamer of four alpha and four beta subunits. Requires pyruvate as cofactor. Is synthesized initially as an inactive proenzyme, which is activated by self-cleavage at a specific serine bond to produce a beta-subunit with a hydroxyl group at its C-terminus and an alpha-subunit with a pyruvoyl group at its N-terminus.

The protein localises to the cytoplasm. It carries out the reaction L-aspartate + H(+) = beta-alanine + CO2. It participates in cofactor biosynthesis; (R)-pantothenate biosynthesis; beta-alanine from L-aspartate: step 1/1. Its function is as follows. Catalyzes the pyruvoyl-dependent decarboxylation of aspartate to produce beta-alanine. The protein is Aspartate 1-decarboxylase of Herpetosiphon aurantiacus (strain ATCC 23779 / DSM 785 / 114-95).